A 72-amino-acid polypeptide reads, in one-letter code: UPF0270 protein YheU (72 aa).

It belongs to the UPF0270 family.

This is UPF0270 protein YheU from Escherichia coli (strain ATCC 8739 / DSM 1576 / NBRC 3972 / NCIMB 8545 / WDCM 00012 / Crooks).